The sequence spans 119 residues: Large ribosomal subunit protein bL19 (119 aa).

It belongs to the bacterial ribosomal protein bL19 family.

This protein is located at the 30S-50S ribosomal subunit interface and may play a role in the structure and function of the aminoacyl-tRNA binding site. The protein is Large ribosomal subunit protein bL19 of Pseudoalteromonas translucida (strain TAC 125).